Consider the following 218-residue polypeptide: Pyridoxal phosphate homeostasis protein (218 aa).

N6-(pyridoxal phosphate)lysine is present on lysine 25.

It belongs to the pyridoxal phosphate-binding protein YggS/PROSC family.

In terms of biological role, pyridoxal 5'-phosphate (PLP)-binding protein, which is involved in PLP homeostasis. The sequence is that of Pyridoxal phosphate homeostasis protein from Synechocystis sp. (strain ATCC 27184 / PCC 6803 / Kazusa).